The following is a 381-amino-acid chain: Chymosin (381 aa).

The N-terminal stretch at 1 to 16 (MRCLVVLLAVFALSQG) is a signal peptide. Positions 17–58 (AEITRIPLYKGKPLRKALKERGLLEDFLQKQQYGVSSEYSGF) are cleaved as a propeptide — activation peptide. A Peptidase A1 domain is found at 74 to 378 (YFGKIYLGTP…DRANNLVGLA (305 aa)). Residue Asp92 is part of the active site. 2 cysteine pairs are disulfide-bonded: Cys105-Cys110 and Cys265-Cys269. Residue Asp274 is part of the active site. An intrachain disulfide couples Cys308 to Cys341.

It belongs to the peptidase A1 family. As to quaternary structure, monomer.

The catalysed reaction is Broad specificity similar to that of pepsin A. Clots milk by cleavage of a single 104-Ser-Phe-|-Met-Ala-107 bond in kappa-chain of casein.. Its function is as follows. Chymosin is synthesized in the mucosa of the stomach. The enzyme hydrolyzes casein to paracasein. The chain is Chymosin (CYM) from Ovis aries (Sheep).